The sequence spans 466 residues: Ribulose bisphosphate carboxylase large chain (466 aa).

Lys-5 carries the N6,N6,N6-trimethyllysine modification. Substrate is bound by residues Asn-114 and Thr-164. Residue Lys-166 is the Proton acceptor of the active site. Lys-168 is a substrate binding site. Mg(2+) is bound by residues Lys-192, Asp-194, and Glu-195. Residue Lys-192 is modified to N6-carboxylysine. Residue His-285 is the Proton acceptor of the active site. Arg-286, His-318, and Ser-370 together coordinate substrate.

The protein belongs to the RuBisCO large chain family. Type I subfamily. In terms of assembly, heterohexadecamer of 8 large chains and 8 small chains; disulfide-linked. The disulfide link is formed within the large subunit homodimers. Requires Mg(2+) as cofactor. Post-translationally, the disulfide bond which can form in the large chain dimeric partners within the hexadecamer appears to be associated with oxidative stress and protein turnover.

It is found in the plastid. Its subcellular location is the chloroplast. It carries out the reaction 2 (2R)-3-phosphoglycerate + 2 H(+) = D-ribulose 1,5-bisphosphate + CO2 + H2O. The enzyme catalyses D-ribulose 1,5-bisphosphate + O2 = 2-phosphoglycolate + (2R)-3-phosphoglycerate + 2 H(+). In terms of biological role, ruBisCO catalyzes two reactions: the carboxylation of D-ribulose 1,5-bisphosphate, the primary event in carbon dioxide fixation, as well as the oxidative fragmentation of the pentose substrate in the photorespiration process. Both reactions occur simultaneously and in competition at the same active site. This is Ribulose bisphosphate carboxylase large chain from Saururus cernuus (Lizard's tail).